The sequence spans 386 residues: Uroporphyrinogen decarboxylase (386 aa).

Positions 44, 46, 48, 57, 93, 170, 225, and 364 each coordinate coproporphyrinogen I. 3 residues coordinate coproporphyrinogen III: Arg-44, Ala-46, and Arg-48. Coproporphyrinogen III-binding residues include Asp-93, Tyr-170, Ser-225, and His-364.

It belongs to the uroporphyrinogen decarboxylase family. As to quaternary structure, homodimer.

It is found in the cytoplasm. The protein resides in the cytosol. The catalysed reaction is uroporphyrinogen III + 4 H(+) = coproporphyrinogen III + 4 CO2. The protein operates within porphyrin-containing compound metabolism; protoporphyrin-IX biosynthesis; coproporphyrinogen-III from 5-aminolevulinate: step 4/4. Catalyzes the decarboxylation of four acetate groups of uroporphyrinogen-III to yield coproporphyrinogen-III. This is Uroporphyrinogen decarboxylase from Drosophila virilis (Fruit fly).